The following is a 193-amino-acid chain: MTQPLLLASTSPFRKVLLDKFQYPFETANPNTDESSFSGESAEALVQRLAEQKAKACGNNYPEHLIIGSDQVCVINGKIIGKPHTVENACLQLKAASGQIVTFYTGLCLYNAKTGQSDVICEPFHVHFRQLTEQEIERYIEREMPLYCAGSFMCEGLGIALFNKLEGRDPNTLIGLPLIALREMLEKQGISIL.

Asp-70 serves as the catalytic Proton acceptor.

This sequence belongs to the Maf family. YceF subfamily. Requires a divalent metal cation as cofactor.

It localises to the cytoplasm. The enzyme catalyses N(7)-methyl-GTP + H2O = N(7)-methyl-GMP + diphosphate + H(+). Functionally, nucleoside triphosphate pyrophosphatase that hydrolyzes 7-methyl-GTP (m(7)GTP). May have a dual role in cell division arrest and in preventing the incorporation of modified nucleotides into cellular nucleic acids. The sequence is that of 7-methyl-GTP pyrophosphatase from Photobacterium profundum (strain SS9).